We begin with the raw amino-acid sequence, 2737 residues long: Non-reducing polyketide synthase ATEG_07661 (2737 aa).

An N-terminal acylcarrier protein transacylase domain (SAT) region spans residues 75–245; sequence SRSLAELDSW…VRYDQTRATV (171 aa). Cys154 acts as the Nucleophile; for transacylase activity in catalysis. Residue His276 is the Proton donor/acceptor; for transacylase activity of the active site. In terms of domain architecture, Ketosynthase family 3 (KS3) spans 427–854; the sequence is NEAIAIVGMS…GSNASMIITE (428 aa). Active-site for beta-ketoacyl synthase activity residues include Cys603, His738, and His777. The interval 969–1260 is malonyl-CoA:ACP transacylase (MAT); sequence FGGQVSRFVG…IMASRAIAQS (292 aa). The N-terminal hotdog fold stretch occupies residues 1368 to 1503; sequence LQSLWNFVEF…ASVEMRAPTD (136 aa). The PKS/mFAS DH domain occupies 1368–1683; the sequence is LQSLWNFVEF…YGRVAKASMS (316 aa). Residues 1399–1681 form a product template (PT) domain region; the sequence is FVLSHVIAQT…VQYGRVAKAS (283 aa). The active-site Proton acceptor; for dehydratase activity is His1403. A C-terminal hotdog fold region spans residues 1535 to 1683; it reads VEVLQGRNVY…YGRVAKASMS (149 aa). Asp1592 (proton donor; for dehydratase activity) is an active-site residue. The interval 1724 to 1747 is disordered; that stretch reads SRTTKKKAKASKSKSSVKKDKAPS. The segment covering 1725-1739 has biased composition (basic residues); it reads RTTKKKAKASKSKSS. Positions 1750 to 1824 constitute a Carrier domain; sequence RDITDEVRNL…KFVACVSNAL (75 aa). The residue at position 1784 (Ser1784) is an O-(pantetheine 4'-phosphoryl)serine. Positions 1827-1876 are disordered; it reads PNQGQSSIDEDDEDDEHSEDSSNESSSAASDEDASSGLESPDTGILTPED. Acidic residues predominate over residues 1834–1848; sequence IDEDDEDDEHSEDSS. The span at 1849–1866 shows a compositional bias: low complexity; that stretch reads NESSSAASDEDASSGLES. The interval 2094–2270 is methyltransferase domain; sequence ADRIQSSSGS…GFGHVDWTDG (177 aa). The interval 2362–2665 is NADPH-binding domain; sequence VVLVTGATGS…IPFKDWISRV (304 aa).

It functions in the pathway secondary metabolite biosynthesis. Its function is as follows. Non-reducing polyketide synthase; part of the cluster B that mediates the biosynthesis of azasperpyranones, members of the azaphilone family that exhibit anti-cancer activities. Azasperpyranones are synthesized by 2 clusters, A and B. Cluster A is responsible for the production of the polyhydric phenol moiety while the azaphilonoid scaffold is produced by the cluster B. The non-reducing polyketide synthase ATEG_03629 produces 5-methyl orsellinic acid, which is then reduced to 5-methyl orsellinic aldehyde by the NRPS-like protein ATEG_03630. 5-methyl orsellinic aldehyde is then first hydroxylated by the FAD-dependent monooxygenase ATEG_03635 and subsequently hydroxylated by the cytochrome P450 monooxygenase ATEG_03631 to produce the unstable polyhydric phenol precursor of azasperpyranones. On the other hand, the polyketide synthase ATEG_07659 is responsible for producing the 3,5-dimethyloctadienone moiety from acetyl-CoA, three malonyl-CoA, and two S-adenosyl methionines (SAM). The 3,5-dimethyloctadienone moiety is then loaded onto the SAT domain of ATEG_07661 and extended with four malonyl-CoA and one SAM, which leads to the formation of 2,4-dihydroxy-6-(5,7-dimethyl-2-oxo-trans-3-trans-5-nonadienyl)-3-methylbenzaldehyde (compound 8) after reductive release and aldol condensation. The FAD-dependent monooxygenase ATEG_07662 is the next enzyme in the biosynthesis sequence and hydroxylates the side chain at the benzylic position of compound 8. In Aspergillus nidulans, afoF, the ortholog of the FAD-dependent oxygenase ATEG_07660, is the key enzyme for the biosynthesis of asperfuranone by catalyzing the hydroxylation at C-8 of to prevent the formation of a six-membered ring hemiacetal intermediate and thus facilitating the formation of a five-membered ring to produce asperfuranone. In Aspergillus terreus, ATEG_07660 is probably not functional, which leads to the formation of the six-membered ring hemiacetal intermediate presperpyranone instead of asperfuranone. Finally, ATEG_03636 is involved in the condensation of the polyhydric phenol moiety produced by cluster A and the perasperpyranone precursor produced by cluster B, to yield azasperpyranone A. Further modifications of azasperpyranone A result in the production of derivatives, including azasperpyranone B to F. The polypeptide is Non-reducing polyketide synthase ATEG_07661 (Aspergillus terreus (strain NIH 2624 / FGSC A1156)).